Reading from the N-terminus, the 211-residue chain is FMN-dependent NADH:quinone oxidoreductase (211 aa).

Residues serine 10 and 16-18 (SVS) contribute to the FMN site.

Belongs to the azoreductase type 1 family. As to quaternary structure, homodimer. The cofactor is FMN.

It catalyses the reaction 2 a quinone + NADH + H(+) = 2 a 1,4-benzosemiquinone + NAD(+). The enzyme catalyses N,N-dimethyl-1,4-phenylenediamine + anthranilate + 2 NAD(+) = 2-(4-dimethylaminophenyl)diazenylbenzoate + 2 NADH + 2 H(+). Quinone reductase that provides resistance to thiol-specific stress caused by electrophilic quinones. Functionally, also exhibits azoreductase activity. Catalyzes the reductive cleavage of the azo bond in aromatic azo compounds to the corresponding amines. This is FMN-dependent NADH:quinone oxidoreductase from Parafrankia sp. (strain EAN1pec).